A 665-amino-acid polypeptide reads, in one-letter code: MESTTLSKPFKNQVNPWGPLIVLLILGRVNPVALGNSPHQVFNLSWEVTNEDRETVWAITGNHPLWTWWPDLTPDLCMLALHGPSYWGLEYQAPFSPPPGPPCCSRSSGSTPGCSRDCEEPLTSYTPRCNTAWNRLKLSKVTHAHNEGFYVCPGPHRPRWARSCGGPESFYCASWGCETTGRASWKPSSSWDYITVSNNLTSGQATPVCKNNTWCNSLTIRFTSLGKQATSWVTGHWWGLRLYVSGHDPGLIFGIRLKITDSGPRVPIGPNPVLSDQRPPSQPRSPPHSNSTPTETPLTLPEPPPAGVENRLLNLVKGAYQALNLTSPDRTQECWLCLVSGPPYYEGVAVLGTYSNHTSAPANCSVASQHKLTLSEVTGRGLCVGAVPKTHQALCNTTQNTSGGSYYLAAPAGTIWACNTGLTPCLSTTVLNLTTDYCVLVELWPRVTYHSPSYVYHQFEGRAKYKREPVSLTLALLLGGLTMGGIAAGVGTGTTALVATQQLQAAVHDDLKEVEKSITNLEKSLTSLSEVVLQNRRGLDLLFLKEGGLCAALKEECCFYADHTGVVRDSMAKLRERLNQRQKLFESGQGWFERLFNGSPWFTTLISTIMGPLIVLLLILLLGPCILNRLVQFVKDRISVVQALVLTQQYHQLKSIDPEEMESRE.

The signal sequence occupies residues Met-1 to Pro-31. The segment at Val-32–Pro-267 is receptor-binding domain (RBD). Over Val-32 to Leu-605 the chain is Extracellular. A glycan (N-linked (GlcNAc...) asparagine; by host) is linked at Asn-43. Disulfide bonds link Cys-77–Cys-129, Cys-103–Cys-118, Cys-104–Cys-114, Cys-152–Cys-172, and Cys-164–Cys-177. Zn(2+) is bound at residue Asp-117. 2 N-linked (GlcNAc...) asparagine; by host glycosylation sites follow: Asn-199 and Asn-211. A disulfide bridge links Cys-209 with Cys-215. The tract at residues Val-266–Gly-307 is disordered. Asn-324 is a glycosylation site (N-linked (GlcNAc...) asparagine; by host). 6 disulfide bridges follow: Cys-334-Cys-337, Cys-334-Cys-558, Cys-364-Cys-418, Cys-383-Cys-395, Cys-425-Cys-438, and Cys-550-Cys-557. A CXXC motif is present at residues Cys-334–Cys-337. 2 N-linked (GlcNAc...) asparagine; by host glycosylation sites follow: Asn-356 and Asn-363. Residues Asn-396, Asn-400, and Asn-432 are each glycosylated (N-linked (GlcNAc...) asparagine; by host). The fusion peptide stretch occupies residues Val-470–Val-490. Positions Ala-505–Val-532 form a coiled coil. The segment at Leu-533–Leu-549 is immunosuppression. The short motif at Cys-550–Cys-558 is the CX6CC element. The helical transmembrane segment at Ile-606 to Ile-626 threads the bilayer. A lipid anchor (S-palmitoyl cysteine; by host) is attached at Cys-625. The Cytoplasmic portion of the chain corresponds to Leu-627 to Glu-665. Residues Tyr-650–Leu-653 carry the YXXL motif; contains endocytosis signal motif.

In terms of assembly, the mature envelope protein (Env) consists of a trimer of SU-TM heterodimers attached by a labile interchain disulfide bond. Specific enzymatic cleavages in vivo yield mature proteins. Envelope glycoproteins are synthesized as an inactive precursor that is N-glycosylated and processed likely by host cell furin or by a furin-like protease in the Golgi to yield the mature SU and TM proteins. The cleavage site between SU and TM requires the minimal sequence [KR]-X-[KR]-R. The R-peptide is released from the C-terminus of the cytoplasmic tail of the TM protein upon particle formation as a result of proteolytic cleavage by the viral protease. Cleavage of this peptide is required for TM to become fusogenic. In terms of processing, the CXXC motif is highly conserved across a broad range of retroviral envelope proteins. It is thought to participate in the formation of a labile disulfide bond possibly with the CX6CC motif present in the transmembrane protein. Isomerization of the intersubunit disulfide bond to an SU intrachain disulfide bond is thought to occur upon receptor recognition in order to allow membrane fusion. Post-translationally, the transmembrane protein is palmitoylated. The R-peptide is palmitoylated.

Its subcellular location is the virion membrane. The protein localises to the host cell membrane. Functionally, the surface protein (SU) attaches the virus to the host cell by binding to its receptor. This interaction triggers the refolding of the transmembrane protein (TM) and is thought to activate its fusogenic potential by unmasking its fusion peptide. Fusion occurs at the host cell plasma membrane. In terms of biological role, the transmembrane protein (TM) acts as a class I viral fusion protein. Under the current model, the protein has at least 3 conformational states: pre-fusion native state, pre-hairpin intermediate state, and post-fusion hairpin state. During viral and target cell membrane fusion, the coiled coil regions (heptad repeats) assume a trimer-of-hairpins structure, positioning the fusion peptide in close proximity to the C-terminal region of the ectodomain. The formation of this structure appears to drive apposition and subsequent fusion of viral and target cell membranes. Membranes fusion leads to delivery of the nucleocapsid into the cytoplasm. The sequence is that of Envelope glycoprotein (env) from Mus musculus (Mouse).